The sequence spans 474 residues: Pleckstrin homology domain-containing family S member 1 (474 aa).

The 116-residue stretch at 20-135 (EVHKRDYFIK…WVSFMTPYCQ (116 aa)) folds into the PH domain. 3 disordered regions span residues 232–251 (IAGPNDSGDSIESNSPDQGF), 272–321 (STSA…DDQK), and 449–474 (RDLPELERTPKRSPAIKKSQKEAAGE). Over residues 238-248 (SGDSIESNSPD) the composition is skewed to polar residues. Positions 449 to 458 (RDLPELERTP) are enriched in basic and acidic residues.

The chain is Pleckstrin homology domain-containing family S member 1 from Mus musculus (Mouse).